The primary structure comprises 485 residues: Probable L-xylulose kinase (485 aa).

Belongs to the FGGY kinase family. In terms of assembly, homodimer.

The enzyme catalyses L-xylulose + ATP = L-xylulose 5-phosphate + ADP + H(+). The polypeptide is Probable L-xylulose kinase (lyx) (Haemophilus influenzae (strain ATCC 51907 / DSM 11121 / KW20 / Rd)).